A 178-amino-acid chain; its full sequence is Large ribosomal subunit protein uL6 (178 aa).

Belongs to the universal ribosomal protein uL6 family. In terms of assembly, part of the 50S ribosomal subunit.

Functionally, this protein binds to the 23S rRNA, and is important in its secondary structure. It is located near the subunit interface in the base of the L7/L12 stalk, and near the tRNA binding site of the peptidyltransferase center. The polypeptide is Large ribosomal subunit protein uL6 (Corynebacterium glutamicum (strain R)).